Here is a 246-residue protein sequence, read N- to C-terminus: Auxin-responsive protein IAA25 (246 aa).

The interval 1–22 (MKSSSVAPRLKQERQDDCKFQE) is disordered. Residues 10–22 (LKQERQDDCKFQE) show a composition bias toward basic and acidic residues. An EAR-like (transcriptional repression) motif is present at residues 28-32 (LELRL). A PB1 domain is found at 143 to 238 (TMFVKVNLEG…SVKRLYIAQD (96 aa)).

The protein belongs to the Aux/IAA family. As to quaternary structure, homodimers and heterodimers. Highly expressed in flowers. Expressed in roots and seedlings.

The protein localises to the nucleus. Aux/IAA proteins are short-lived transcriptional factors that function as repressors of early auxin response genes at low auxin concentrations. This chain is Auxin-responsive protein IAA25 (IAA25), found in Oryza sativa subsp. japonica (Rice).